We begin with the raw amino-acid sequence, 147 residues long: Large ribosomal subunit protein bL9 (147 aa).

Belongs to the bacterial ribosomal protein bL9 family.

In terms of biological role, binds to the 23S rRNA. In Shouchella clausii (strain KSM-K16) (Alkalihalobacillus clausii), this protein is Large ribosomal subunit protein bL9.